A 351-amino-acid chain; its full sequence is Ribosomal RNA large subunit methyltransferase M (351 aa).

Residues Ser-186, 219 to 222 (APGG), Asp-238, Asp-258, and Asp-274 contribute to the S-adenosyl-L-methionine site. Residue Lys-303 is the Proton acceptor of the active site.

It belongs to the class I-like SAM-binding methyltransferase superfamily. RNA methyltransferase RlmE family. RlmM subfamily. Monomer.

It is found in the cytoplasm. It catalyses the reaction cytidine(2498) in 23S rRNA + S-adenosyl-L-methionine = 2'-O-methylcytidine(2498) in 23S rRNA + S-adenosyl-L-homocysteine + H(+). Its function is as follows. Catalyzes the 2'-O-methylation at nucleotide C2498 in 23S rRNA. This chain is Ribosomal RNA large subunit methyltransferase M, found in Xylella fastidiosa (strain M23).